Consider the following 148-residue polypeptide: Large ribosomal subunit protein bL9 (148 aa).

This sequence belongs to the bacterial ribosomal protein bL9 family.

In terms of biological role, binds to the 23S rRNA. The sequence is that of Large ribosomal subunit protein bL9 from Frankia casuarinae (strain DSM 45818 / CECT 9043 / HFP020203 / CcI3).